The sequence spans 450 residues: Protein tweety homolog 1 (450 aa).

Over 1–43 the chain is Extracellular; the sequence is MGAPPGYRPSAWVHLLHQLPRADFQLRPVPSAFAPQEREYQQA. Residues 44–64 traverse the membrane as a helical segment; it reads LLLVAALAGLGLGLSLIFIAV. The Cytoplasmic segment spans residues 65 to 88; sequence YLIRFCCCRPPEPPGAKSPPPGGG. The chain crosses the membrane as a helical span at residues 89 to 109; it reads CVTWNCIAALLVGCAGIGVGF. The Extracellular portion of the chain corresponds to 110-214; that stretch reads YGNSETSDGV…DVSFVEEYRW (105 aa). An N-linked (GlcNAc...) asparagine glycan is attached at Asn130. The helical transmembrane segment at 215–235 threads the bilayer; that stretch reads LAYVLLLLLELLVCLFTLLGL. At 236 to 240 the chain is on the cytoplasmic side; that stretch reads ARQSK. Residues 241–261 traverse the membrane as a helical segment; sequence WLVIVMTVMSLLVLVLSWGSM. Topologically, residues 262–390 are extracellular; it reads GLEAATAVGL…LRGLCEDTLE (129 aa). 2 disulfide bridges follow: Cys275–Cys385 and Cys303–Cys370. 2 N-linked (GlcNAc...) asparagine glycosylation sites follow: Asn284 and Asn355. Residues 391–411 traverse the membrane as a helical segment; the sequence is GLLFLLLFSLLSAGALATVLC. Over 412–450 the chain is Cytoplasmic; the sequence is SLPRAWALFPPSDDYEDTDDDDPFNPQESKRFVQWQSSI. The segment at 427 to 450 is disordered; that stretch reads EDTDDDDPFNPQESKRFVQWQSSI. Residue Ser440 is modified to Phosphoserine.

The protein belongs to the tweety family. Homotetramer; disulfide-linked. Homodimer. In terms of processing, N-glycosylated. Contains high-mannose, hybrid and complex oligosaccharides.

It is found in the cell membrane. The catalysed reaction is chloride(in) = chloride(out). It catalyses the reaction L-glutamate(out) = L-glutamate(in). Functionally, calcium-independent, swelling-dependent volume-regulated anion channel (VRAC-swell) which plays a pivotal role in the process of regulatory volume decrease (RVD) in the brain through the efflux of anions like chloride and organic osmolytes like glutamate. This is Protein tweety homolog 1 (TTYH1) from Bos taurus (Bovine).